A 612-amino-acid polypeptide reads, in one-letter code: Vitamin B12 transporter BtuB (612 aa).

The signal sequence occupies residues 1–20; sequence MIKKSLLCTALSVTAFSGWA. The TonB box motif lies at 26–33; the sequence is DTLVVTAN. Residues 38–152 form the TBDR plug domain; the sequence is PRSAVLAPIT…IGGVVNIITT (115 aa). Residues Ser-85, Asn-92, and 110-111 contribute to the cyanocob(III)alamin site; that span reads VS. The TBDR beta-barrel domain occupies 155–612; it reads KPGTELTAGV…EYTLSGSYTF (458 aa). 3 beta stranded membrane passes run 158–165, 169–178, and 184–195; these read TELTAGVG, YQNYDVSTQQ, and TRVTLMGDYAYT. Residues Asp-199, Gln-211, Asp-213, and Asp-215 each coordinate Ca(2+). A run of 2 beta stranded transmembrane segments spans residues 217 to 227 and 232 to 248; these read FLSKTLYGALE and DTWS…NRTN. Ca(2+)-binding residues include Tyr-249, Asp-250, and Asp-261. A run of 14 beta stranded transmembrane segments spans residues 263-277, 279-296, 309-325, 328-337, 353-369, 371-381, 385-400, 403-417, 434-443, 449-458, 473-490, 494-509, 517-529, and 535-550; these read RKLY…LRFN, ELIQ…KDYN, TLDE…NSIV, HGNVGAGVDW, YDQR…QQLG, FTFEGAARSDD, FGRH…WEFI, YRFI…KAPN, QSKQWEGAFE, VNWRVSGYRN, YFNE…TANF, PLAH…SRNA, RRSK…QLDW, and DWGL…YDTD. Thr-309 contacts cyanocob(III)alamin. Cyanocob(III)alamin is bound at residue Arg-517. Tyr-551 is a binding site for cyanocob(III)alamin. Beta stranded transmembrane passes span 556 to 570, 583 to 594, and 600 to 612; these read PVKM…LAVS, IANRFDKDYETV, and AGRE…SYTF. A TonB C-terminal box motif is present at residues 595–612; sequence YGYATAGREYTLSGSYTF.

This sequence belongs to the TonB-dependent receptor family. BtuB (TC 1.B.14.3.1) subfamily.

Its subcellular location is the cell outer membrane. Functionally, involved in the active translocation of vitamin B12 (cyanocobalamin) across the outer membrane to the periplasmic space. It derives its energy for transport by interacting with the trans-periplasmic membrane protein TonB. The chain is Vitamin B12 transporter BtuB from Citrobacter freundii.